The primary structure comprises 693 residues: Glycine--tRNA ligase beta subunit (693 aa).

It belongs to the class-II aminoacyl-tRNA synthetase family. In terms of assembly, tetramer of two alpha and two beta subunits.

The protein localises to the cytoplasm. The enzyme catalyses tRNA(Gly) + glycine + ATP = glycyl-tRNA(Gly) + AMP + diphosphate. The protein is Glycine--tRNA ligase beta subunit (glyS) of Halalkalibacterium halodurans (strain ATCC BAA-125 / DSM 18197 / FERM 7344 / JCM 9153 / C-125) (Bacillus halodurans).